Here is a 253-residue protein sequence, read N- to C-terminus: Electron transfer flavoprotein subunit beta, mitochondrial (253 aa).

Belongs to the ETF beta-subunit/FixA family. Heterodimer of an alpha and a beta subunit. FAD is required as a cofactor. Requires AMP as cofactor.

The protein localises to the mitochondrion matrix. In terms of biological role, the electron transfer flavoprotein serves as a specific electron acceptor for several dehydrogenases, including five acyl-CoA dehydrogenases, glutaryl-CoA and sarcosine dehydrogenase. It transfers the electrons to the main mitochondrial respiratory chain via ETF-ubiquinone oxidoreductase (ETF dehydrogenase). This Oryza sativa subsp. japonica (Rice) protein is Electron transfer flavoprotein subunit beta, mitochondrial (ETFB).